A 36-amino-acid polypeptide reads, in one-letter code: Potassium channel toxin alpha-KTx 16.1 (36 aa).

3 disulfide bridges follow: C7/C28, C13/C33, and C17/C35.

The protein belongs to the short scorpion toxin superfamily. Potassium channel inhibitor family. Alpha-KTx 16 subfamily. Expressed by the venom gland.

It localises to the secreted. Blocks calcium-activated potassium channels. In Hottentotta tamulus (Eastern Indian scorpion), this protein is Potassium channel toxin alpha-KTx 16.1.